Here is a 930-residue protein sequence, read N- to C-terminus: Dual serine/threonine and tyrosine protein kinase (930 aa).

A coiled-coil region spans residues R383–K428. A Protein kinase domain is found at P653–L907. Residues L659–V667 and K682 contribute to the ATP site. D778 serves as the catalytic Proton acceptor.

It belongs to the protein kinase superfamily. Ser/Thr protein kinase family. Widely expressed with the highest expression in brain and ovary.

It localises to the cytoplasm. It is found in the cell membrane. The protein resides in the apical cell membrane. The protein localises to the basolateral cell membrane. Its subcellular location is the cell junction. It carries out the reaction L-seryl-[protein] + ATP = O-phospho-L-seryl-[protein] + ADP + H(+). The catalysed reaction is L-threonyl-[protein] + ATP = O-phospho-L-threonyl-[protein] + ADP + H(+). It catalyses the reaction L-tyrosyl-[protein] + ATP = O-phospho-L-tyrosyl-[protein] + ADP + H(+). Its function is as follows. May act as a positive regulator of ERK phosphorylation downstream of fibroblast growth factor-receptor activation. May induce both caspase-dependent apoptosis and caspase-independent cell death. This chain is Dual serine/threonine and tyrosine protein kinase (DSTYK), found in Gallus gallus (Chicken).